The following is a 142-amino-acid chain: Large ribosomal subunit protein bL17 (142 aa).

The protein belongs to the bacterial ribosomal protein bL17 family. In terms of assembly, part of the 50S ribosomal subunit. Contacts protein L32.

This chain is Large ribosomal subunit protein bL17, found in Chlamydia pneumoniae (Chlamydophila pneumoniae).